The primary structure comprises 370 residues: Chloromuconate cycloisomerase (370 aa).

The active-site Proton acceptor is the K165. Residues D194, E220, and D245 each contribute to the Mn(2+) site. E323 serves as the catalytic Proton donor.

The protein belongs to the mandelate racemase/muconate lactonizing enzyme family. The cofactor is Mn(2+).

It carries out the reaction 2-[(2R)-2-chloro-2,5-dihydro-5-oxofuryl]acetate = 3-chloro-cis,cis-muconate + H(+). Its pathway is aromatic compound metabolism; 3-chlorocatechol degradation. The polypeptide is Chloromuconate cycloisomerase (tcbD) (Pseudomonas sp. (strain P51)).